The sequence spans 270 residues: Phosphatidylglycerol--prolipoprotein diacylglyceryl transferase (270 aa).

Helical transmembrane passes span V14–L34, Y60–Y80, F103–I123, L133–I153, P181–Y201, G209–F229, and G235–F255. R152 contacts a 1,2-diacyl-sn-glycero-3-phospho-(1'-sn-glycerol).

This sequence belongs to the Lgt family.

The protein resides in the cell inner membrane. The catalysed reaction is L-cysteinyl-[prolipoprotein] + a 1,2-diacyl-sn-glycero-3-phospho-(1'-sn-glycerol) = an S-1,2-diacyl-sn-glyceryl-L-cysteinyl-[prolipoprotein] + sn-glycerol 1-phosphate + H(+). The protein operates within protein modification; lipoprotein biosynthesis (diacylglyceryl transfer). Catalyzes the transfer of the diacylglyceryl group from phosphatidylglycerol to the sulfhydryl group of the N-terminal cysteine of a prolipoprotein, the first step in the formation of mature lipoproteins. The chain is Phosphatidylglycerol--prolipoprotein diacylglyceryl transferase from Campylobacter curvus (strain 525.92).